A 99-amino-acid polypeptide reads, in one-letter code: Malonate decarboxylase acyl carrier protein (99 aa).

An O-(phosphoribosyl dephospho-coenzyme A)serine modification is found at serine 25.

The protein belongs to the MdcC family. In terms of processing, covalently binds the prosthetic group of malonate decarboxylase.

It localises to the cytoplasm. Functionally, subunit of malonate decarboxylase, it is an acyl carrier protein to which acetyl and malonyl thioester residues are bound via a 2'-(5''-phosphoribosyl)-3'-dephospho-CoA prosthetic group and turn over during the catalytic mechanism. The chain is Malonate decarboxylase acyl carrier protein from Stutzerimonas stutzeri (strain A1501) (Pseudomonas stutzeri).